A 952-amino-acid chain; its full sequence is Leucine--tRNA ligase (952 aa).

The short motif at 65 to 76 (PYPSGAGLHVGH) is the 'HIGH' region element. The short motif at 727 to 731 (KMGKS) is the 'KMSKS' region element. Lys-730 is a binding site for ATP.

Belongs to the class-I aminoacyl-tRNA synthetase family.

The protein resides in the cytoplasm. It carries out the reaction tRNA(Leu) + L-leucine + ATP = L-leucyl-tRNA(Leu) + AMP + diphosphate. This chain is Leucine--tRNA ligase, found in Salinispora arenicola (strain CNS-205).